Here is a 1340-residue protein sequence, read N- to C-terminus: Early transcription factor large subunit homolog (1340 aa).

It localises to the virion. Its function is as follows. Putative initation factor. The polypeptide is Early transcription factor large subunit homolog (Ornithodoros (relapsing fever ticks)).